The following is a 122-amino-acid chain: uncharacterized protein (122 aa).

Over residues 1 to 15 the composition is skewed to basic and acidic residues; it reads MAEPGGRGDYHKDGR. Positions 1–26 are disordered; that stretch reads MAEPGGRGDYHKDGRPPSLSRSPLFT.

This is an uncharacterized protein from Macaca fascicularis (Crab-eating macaque).